Reading from the N-terminus, the 736-residue chain is MNTEALIEAAVEVDVQEAAPVVEPDIEVIPAIEAPAASLPAIVAPNLDDSSLYIHRELSQLQFNIRVLEQALDESYPLLERLKFLLIFSSNLDEFFEIRVAGLKKQITFAREQAGADGLQPHQALARISELVHGHVDRQYAILNDILLPELEKHQVRFIRRRHWTAKLKAWVRRYFRDEIAPIITPIGLDPTHPFPLLVNKSLNFIVELEGIDAFGRDSGLAIIPAPRLLPRVIKVPEEVCGPGDNFVFLSSMIHAHADDLFQGMKVKGCYQFRLTRNADLALDSEDVEDLARALRGELFSRRYGDAVRLEVADTCPKHLSDYLLKQFNLHESELYQVNGPVNLTRLFSITGLDSHPELQYPPFTPAIPKLLQNSENVFSVVSKQDILLLHPFESFTPVVDLLRQAAKDPHVLAVRQTLYRSGANSEIVDALVDAARNGKEVTAVIELRARFDEESNLQLASRLQAAGAVVIYGVVGFKTHAKMMLILRREAGEIVRYAHLGTGNYHAGNARLYTDYSLLTSDDALCEDVGKLFSQLIGMGKTLRMKKLLHAPFTLKKGMLDMIARETQFALDGKPAHIIAKFNSLTDPKIIRALYKASQSGVRIDLVVRGMCCLRPGIAGVSHNIHVRSIIGRFLEHTRVFYFLNGGDEQMFLSSADWMERNLDKRVETCFPVEGKKLILRVKKELESYLTDNTHSWLLQSDGRYVRSMPTGNQNARSAQATLLERLSNPVLSVR.

Position 91 (N91) interacts with ATP. Mg(2+) is bound by residues R421 and R451. Catalysis depends on H481, which acts as the Phosphohistidine intermediate. 3 residues coordinate ATP: Y514, R610, and H638.

The protein belongs to the polyphosphate kinase 1 (PPK1) family. Mg(2+) is required as a cofactor. An intermediate of this reaction is the autophosphorylated ppk in which a phosphate is covalently linked to a histidine residue through a N-P bond.

The enzyme catalyses [phosphate](n) + ATP = [phosphate](n+1) + ADP. Functionally, catalyzes the reversible transfer of the terminal phosphate of ATP to form a long-chain polyphosphate (polyP). In Pseudomonas syringae pv. tomato (strain ATCC BAA-871 / DC3000), this protein is Polyphosphate kinase.